Here is a 151-residue protein sequence, read N- to C-terminus: Nucleoside diphosphate kinase (151 aa).

The ATP site is built by Lys-9, Phe-57, Arg-86, Thr-92, Arg-103, and Asn-113. The active-site Pros-phosphohistidine intermediate is the His-116.

It belongs to the NDK family. In terms of assembly, homotetramer. The cofactor is Mg(2+).

It localises to the cytoplasm. It catalyses the reaction a 2'-deoxyribonucleoside 5'-diphosphate + ATP = a 2'-deoxyribonucleoside 5'-triphosphate + ADP. It carries out the reaction a ribonucleoside 5'-diphosphate + ATP = a ribonucleoside 5'-triphosphate + ADP. Its function is as follows. Major role in the synthesis of nucleoside triphosphates other than ATP. The ATP gamma phosphate is transferred to the NDP beta phosphate via a ping-pong mechanism, using a phosphorylated active-site intermediate. This is Nucleoside diphosphate kinase from Chloroflexus aggregans (strain MD-66 / DSM 9485).